Here is a 331-residue protein sequence, read N- to C-terminus: Probable allantoicase (331 aa).

The protein belongs to the allantoicase family.

It carries out the reaction allantoate + H2O = (S)-ureidoglycolate + urea. It participates in nitrogen metabolism; (S)-allantoin degradation; (S)-ureidoglycolate from allantoate (aminidohydrolase route): step 1/1. This Pseudomonas savastanoi pv. phaseolicola (strain 1448A / Race 6) (Pseudomonas syringae pv. phaseolicola (strain 1448A / Race 6)) protein is Probable allantoicase.